Here is a 128-residue protein sequence, read N- to C-terminus: MSFTGKYQLESQEGFVEFMKAVGLPDDMIEKGKDIKSVSEIEENGNQFKVTVTTGSKVLTNSFTIGQEADIETLTGERVKTIVNREGNKLKVVLNRITSITELVDANTLVNTLTLGGLVYKRISKRVA.

This sequence belongs to the calycin superfamily. Fatty-acid binding protein (FABP) family. As to expression, expressed in the yolk syncytial layer (YSL) and subsequently in the intestinal bulb in developing embryos and larvae. In adults, expressed in the intestine.

The protein localises to the cytoplasm. Binds free fatty acids and their coenzyme A derivatives, bilirubin, and some other small molecules in the cytoplasm. May be involved in intracellular lipid transport. The sequence is that of Fatty acid binding protein 1-B.1 (fabp1b.1) from Danio rerio (Zebrafish).